Here is a 98-residue protein sequence, read N- to C-terminus: Small ribosomal subunit protein uS19 (98 aa).

Residues 74 to 98 (FAPTRNYRGHAGGKSEKGGSAPRKK) form a disordered region.

Belongs to the universal ribosomal protein uS19 family.

Protein S19 forms a complex with S13 that binds strongly to the 16S ribosomal RNA. The sequence is that of Small ribosomal subunit protein uS19 from Chlorobium chlorochromatii (strain CaD3).